Here is a 256-residue protein sequence, read N- to C-terminus: Thiazole synthase (256 aa).

The active-site Schiff-base intermediate with DXP is the lysine 95. 1-deoxy-D-xylulose 5-phosphate-binding positions include glycine 156, 182–183, and 204–205; these read AG and NT.

The protein belongs to the ThiG family. Homotetramer. Forms heterodimers with either ThiH or ThiS.

The protein resides in the cytoplasm. It catalyses the reaction [ThiS sulfur-carrier protein]-C-terminal-Gly-aminoethanethioate + 2-iminoacetate + 1-deoxy-D-xylulose 5-phosphate = [ThiS sulfur-carrier protein]-C-terminal Gly-Gly + 2-[(2R,5Z)-2-carboxy-4-methylthiazol-5(2H)-ylidene]ethyl phosphate + 2 H2O + H(+). The protein operates within cofactor biosynthesis; thiamine diphosphate biosynthesis. Its function is as follows. Catalyzes the rearrangement of 1-deoxy-D-xylulose 5-phosphate (DXP) to produce the thiazole phosphate moiety of thiamine. Sulfur is provided by the thiocarboxylate moiety of the carrier protein ThiS. In vitro, sulfur can be provided by H(2)S. This chain is Thiazole synthase, found in Escherichia coli O81 (strain ED1a).